Here is a 397-residue protein sequence, read N- to C-terminus: Elongation factor Tu (397 aa).

The region spanning 10–206 (KPHVNIGTIG…AVDDNVPEPE (197 aa)) is the tr-type G domain. Residues 19–26 (GHVDHGKT) form a G1 region. Position 19 to 26 (19 to 26 (GHVDHGKT)) interacts with GTP. Thr-26 contributes to the Mg(2+) binding site. The interval 62–66 (GITIN) is G2. Positions 83-86 (DAPG) are G3. GTP-binding positions include 83-87 (DAPGH) and 138-141 (NKSD). Positions 138–141 (NKSD) are G4. The segment at 176 to 178 (SAL) is G5.

Belongs to the TRAFAC class translation factor GTPase superfamily. Classic translation factor GTPase family. EF-Tu/EF-1A subfamily. In terms of assembly, monomer.

Its subcellular location is the cytoplasm. It catalyses the reaction GTP + H2O = GDP + phosphate + H(+). Functionally, GTP hydrolase that promotes the GTP-dependent binding of aminoacyl-tRNA to the A-site of ribosomes during protein biosynthesis. The sequence is that of Elongation factor Tu from Brevibacterium linens.